We begin with the raw amino-acid sequence, 295 residues long: NAD kinase (295 aa).

D73 functions as the Proton acceptor in the catalytic mechanism. NAD(+) is bound by residues 73 to 74 (DG), R78, 146 to 147 (NE), K157, R174, D176, and 187 to 192 (TAYSLS).

Belongs to the NAD kinase family. It depends on a divalent metal cation as a cofactor.

Its subcellular location is the cytoplasm. The catalysed reaction is NAD(+) + ATP = ADP + NADP(+) + H(+). Involved in the regulation of the intracellular balance of NAD and NADP, and is a key enzyme in the biosynthesis of NADP. Catalyzes specifically the phosphorylation on 2'-hydroxyl of the adenosine moiety of NAD to yield NADP. This Wigglesworthia glossinidia brevipalpis protein is NAD kinase.